Consider the following 367-residue polypeptide: tRNA/tmRNA (uracil-C(5))-methyltransferase (367 aa).

Residues glutamine 190, tyrosine 218, asparagine 223, glutamate 239, and aspartate 299 each coordinate S-adenosyl-L-methionine. Cysteine 324 acts as the Nucleophile in catalysis. The Proton acceptor role is filled by glutamate 358.

It belongs to the class I-like SAM-binding methyltransferase superfamily. RNA M5U methyltransferase family. TrmA subfamily.

It carries out the reaction uridine(54) in tRNA + S-adenosyl-L-methionine = 5-methyluridine(54) in tRNA + S-adenosyl-L-homocysteine + H(+). The catalysed reaction is uridine(341) in tmRNA + S-adenosyl-L-methionine = 5-methyluridine(341) in tmRNA + S-adenosyl-L-homocysteine + H(+). Dual-specificity methyltransferase that catalyzes the formation of 5-methyluridine at position 54 (m5U54) in all tRNAs, and that of position 341 (m5U341) in tmRNA (transfer-mRNA). The chain is tRNA/tmRNA (uracil-C(5))-methyltransferase from Pectobacterium carotovorum subsp. carotovorum (strain PC1).